Reading from the N-terminus, the 103-residue chain is Large ribosomal subunit protein bL21 (103 aa).

Belongs to the bacterial ribosomal protein bL21 family. In terms of assembly, part of the 50S ribosomal subunit. Contacts protein L20.

This protein binds to 23S rRNA in the presence of protein L20. The polypeptide is Large ribosomal subunit protein bL21 (Saccharophagus degradans (strain 2-40 / ATCC 43961 / DSM 17024)).